The chain runs to 734 residues: MPNNQQNQIESPSKNTSNVGGSTLLNNNSPPFKSNGNLNSIPNGFNFLSSTSFHGGFGSLFSPDYAFNEQASSITSNSNLNILNNDSFDKNFGQSFFNSFSSLGSFNQTQQQKEALLSFQNSYLQQQQKDQQQKEQQKEQQKEQQQQEEQEQQQKEQQPNESNTTTTTTTTTTAVEQQGAEQQDTNLNSTSSPTMMTDVVFNTNDHVDFASANNNVMVTSSPISSSLNNSQDNTKPVSPDNIENTSNPMDTSSSNGKTPTITPIVTPITTPVVTPSSTPLSTPLSTPLSTPLSTPVAPIFNSPTTSTSSTHSNTSTPITVSIINNNNNNNSNSNNNNNNNNNNNNNNTNNTTTTTTTATTTSGGKTNPTGKKTSLKQGWTKEEHIRFLNGIQIHGKGAWKEIAQFVGTRTPTQIQSHAQKYYLRQKQETKNKRSIHDLSLQDLIDDNLNNSNKNNVDKNKQDDKEKKTQKTKKTKSKSSTKGDEEMITQQQQLQQQPQQQPQQKQPPTIITNFNTTPTSSQSSPKSNSPSSPSSPQSFQSSQTEQVVGKLFSPFYRANDGDDSNVRHIPKSFLNNNNSNNNNSNINGINNNNGNGNGNMDMNSNNINSFGNNEGNILRHQNSHQIPPPPPPPIQHVQYQMDFQRQYLPHHTPQPPPPPPIQQMAPIFPIYNGSNIHDINGNNHNNNNNNNNNINNGWIQSPININSQMQPQIHQQFPQNFYQYNPYSAPPPTLQ.

Disordered regions lie at residues 1 to 35, 128 to 196, and 221 to 378; these read MPNNQQNQIESPSKNTSNVGGSTLLNNNSPPFKSN, QKDQ…PTMM, and SPIS…LKQG. The span at 131–142 shows a compositional bias: basic and acidic residues; the sequence is QQQKEQQKEQQK. A compositionally biased stretch (low complexity) spans 164-173; it reads TTTTTTTTTT. The segment covering 174–196 has biased composition (polar residues); it reads AVEQQGAEQQDTNLNSTSSPTMM. The segment covering 221–230 has biased composition (low complexity); it reads SPISSSLNNS. The segment covering 231 to 257 has biased composition (polar residues); that stretch reads QDNTKPVSPDNIENTSNPMDTSSSNGK. Over residues 258-372 the composition is skewed to low complexity; sequence TPTITPIVTP…GGKTNPTGKK (115 aa). The HTH myb-type domain maps to 371-426; that stretch reads KKTSLKQGWTKEEHIRFLNGIQIHGKGAWKEIAQFVGTRTPTQIQSHAQKYYLRQK. A DNA-binding region (H-T-H motif) is located at residues 399 to 422; the sequence is WKEIAQFVGTRTPTQIQSHAQKYY. Low complexity predominate over residues 445–454; it reads DDNLNNSNKN. A disordered region spans residues 445 to 623; the sequence is DDNLNNSNKN…GNILRHQNSH (179 aa). The segment covering 455-468 has biased composition (basic and acidic residues); that stretch reads NVDKNKQDDKEKKT. Over residues 469–478 the composition is skewed to basic residues; the sequence is QKTKKTKSKS. Low complexity-rich tracts occupy residues 489–543 and 574–615; these read QQQQ…SSQT and NNNN…NEGN.

It localises to the nucleus. This Dictyostelium discoideum (Social amoeba) protein is Myb-like protein J (mybJ).